The sequence spans 262 residues: Small ribosomal subunit protein eS4 (262 aa).

The S4 RNA-binding domain occupies 42–105 (LPLXVFLRNR…NEHFRLAYDV (64 aa)).

It belongs to the eukaryotic ribosomal protein eS4 family.

The polypeptide is Small ribosomal subunit protein eS4 (RPS4) (Candida albicans (Yeast)).